We begin with the raw amino-acid sequence, 112 residues long: C-X-C motif chemokine 6 (112 aa).

The N-terminal stretch at Met1–Ala36 is a signal peptide. Cystine bridges form between Cys48/Cys74 and Cys50/Cys90.

This sequence belongs to the intercrine alpha (chemokine CxC) family.

It localises to the secreted. In terms of biological role, chemotactic for neutrophil granulocytes. Signals through binding and activation of its receptors (CXCR1 and CXCR2). In addition to its chemotactic and angiogenic properties, it has strong antibacterial activity against Gram-positive and Gram-negative bacteria (90-fold-higher when compared to CXCL5 and CXCL7). The protein is C-X-C motif chemokine 6 (CXCL6) of Bos taurus (Bovine).